Here is a 213-residue protein sequence, read N- to C-terminus: uncharacterized protein (213 aa).

The N-terminal stretch at 1-19 (MKKVLLLLFVLTIGLALSA) is a signal peptide. Cys-20 carries the N-palmitoyl cysteine lipid modification. A lipid anchor (S-diacylglycerol cysteine) is attached at Cys-20. The interval 20–62 (CSQSSDASEKEKPKEKKSQEELEKELDKELKKGGEPKTKKDDQ) is disordered. The span at 26–62 (ASEKEKPKEKKSQEELEKELDKELKKGGEPKTKKDDQ) shows a compositional bias: basic and acidic residues.

The protein localises to the cell membrane. This is an uncharacterized protein from Bacillus subtilis (strain 168).